The following is a 414-amino-acid chain: Particulate methane monooxygenase alpha subunit (414 aa).

The signal sequence occupies residues 1 to 32; that stretch reads MKTIKDRIAKWSAIGLLSAVAATAFYAPSASA. Positions 33, 48, 72, 137, and 139 each coordinate Cu cation. The segment at 33 to 172 is cupredoxin domain used to construct soluble pmoB (spmoB); the sequence is HGEKSQAAFM…MSEFRNPVTT (140 aa). A run of 2 helical transmembrane segments spans residues 186-206 and 235-255; these read GNTY…IGYW and VAMG…SSAN. The tract at residues 265 to 414 is cupredoxin domain used to construct soluble pmoB (spmoB); it reads QAGTMRGMKP…IDAPLIPSFM (150 aa).

In terms of assembly, m.capsulatus has two forms of methane monooxygenase, a soluble (sMMO) and a membrane-bound (particulate) type (pMMO). The particulate type is a nonamer composed of three alpha:beta:gamma heterotrimeric protomers assembled into a cylindrical structure; the beta and gamma subunits comprise the bulk of the membrane-spanning regions and the soluble regions are derived primarily from alpha subunits which form two antiparallel beta-barrel-like structures each. This assembly, also called pMMO hydroxylase (pMMO-H), is proposed to associate with methanol dehydrogenase (MDH), also designated as pMMO-R, to form the pMMO-C complex which seems to have greater methane monooxygenase activity. The cofactor is Cu(2+).

The protein resides in the membrane. The enzyme catalyses methane + a quinol + O2 = methanol + a quinone + H2O. Methane monooxygenase is responsible for the initial oxygenation of methane to methanol in methanotrophs. At least in vitro, specific quinols can replace NADH as reductants. The polypeptide is Particulate methane monooxygenase alpha subunit (pmoB1) (Methylococcus capsulatus (strain ATCC 33009 / NCIMB 11132 / Bath)).